Reading from the N-terminus, the 5495-residue chain is Microtubule-associated protein futsch (5495 aa).

Disordered stretches follow at residues 1–97, 656–975, 988–1074, 1086–1111, 1128–1167, 1185–1204, 1255–1275, 1306–1358, 1402–1840, 1866–2631, 2709–2810, 2830–4166, 4196–4230, 4362–4612, 4636–4668, 4687–4975, 5035–5065, 5101–5138, 5170–5199, and 5328–5350; these read MGDQ…DADG, AKAD…LKEE, RDEM…AEEE, ERKARLEGASARQDESELDVEPEQSK, KSRTEEQLAKPAEEELSSPTPEEKLSKKTSDTKDDQIGAP, SATIESGATTAPTLPEDERI, KDAPKDANAEALGELPDSGER, HEEA…EPNK, NQED…VVES, EIGK…PGFV, AKTV…KDFA, LPTL…DLSL, KAESSPRPAVLSKPAEFSQPDTGHTASTPVDEASP, IIPD…ASQL, AQKSNKEIKDARETKVTSQFTTTTSSATKDDSL, AFST…QMLA, KTVTTTDSSEPDSEKVVVTTTRTTSESERDQ, SYELQHSSSGVSKRSDLDADGDESQDDIPPQYGSEEHS, PSTEPIPIQGAPSGDSQSSESVESSSQTWA, and GLPSPAPLPVEGGADIRTTPKKE. Residues 35–48 are compositionally biased toward low complexity; that stretch reads AKGAGDGPAQDAAQ. Basic and acidic residues-rich tracts occupy residues 656–672, 696–716, and 758–795; these read AKADSMDTDAEPEHEAD, EPEHEPEAEQDKDVGEEKKVE, and GKADKPRAEVKPVVRSRIDTKPPKSMDRKLAKRDEKKS. Low complexity-rich tracts occupy residues 797-806 and 819-831; these read PTTTPAARAP and PATKSSPSSTPAK. Residues 832–843 show a composition bias toward basic and acidic residues; the sequence is SAKEANNRKVLE. The segment covering 850 to 888 has biased composition (low complexity); that stretch reads RVQATSTVSRRVTSTASERRVQQQAEAKTAATGATQATQ. The span at 918–931 shows a compositional bias: basic and acidic residues; the sequence is KAADLKKTRLDKGG. Residues 932–942 show a composition bias toward polar residues; that stretch reads TTDSSLVSTPS. Basic and acidic residues-rich tracts occupy residues 962–975 and 988–1007; these read DAEKQRELDDLKEE and RDEMKRQQHQQIKAELREMP. Over residues 1012–1041 the composition is skewed to acidic residues; that stretch reads GDGENEPDEEEEYLIIEKEEVEQYTEDSIV. A compositionally biased stretch (basic and acidic residues) spans 1047-1065; it reads MTKEEEIQKHQRDSQESEK. Composition is skewed to basic and acidic residues over residues 1128–1140 and 1148–1163; these read KSRTEEQLAKPAE and PEEKLSKKTSDTKDDQ. Over residues 1187–1196 the composition is skewed to polar residues; the sequence is TIESGATTAP. 4 stretches are compositionally biased toward basic and acidic residues: residues 1306-1319, 1327-1337, 1343-1358, and 1408-1443; these read HEEADLGLYEKDSQ, SHKEESAKEEK, KENKVGEIELGDEPNK, and EQVKDKEEHEQKIESGIITEKEAKKSASTPEEKETS. Tandem repeats lie at residues 1469-1502 and 1513-1539. The tract at residues 1469-4032 is 53 X approximate repeat; sequence REDTGSIESP…SPLASKESSR (2564 aa). 5 stretches are compositionally biased toward basic and acidic residues: residues 1546-1555, 1571-1663, 1679-1696, 1718-1732, and 1748-1779; these read PESEAKDKKS, SVKD…DEKS, SVKDETEKSKEPSRRESI, GIKDESAKPESRRDS, and SVKDEPIKSTEKSRRESVAESFKADSTKDEKS. 17 repeat units span residues 1622–1649, 1660–1686, 1690–1718, 1755–1782, 1790–1818, 1837–1865, 1874–1902, 1911–1939, 1948–1976, 1985–2013, 2022–2050, 2059–2087, 2096–2124, 2133–2161, 2170–2198, 2215–2243, and 2262–2292. A compositionally biased stretch (polar residues) spans 1804–1815; sequence ERSQPESVTASR. 18 stretches are compositionally biased toward basic and acidic residues: residues 1887-1896, 1904-1942, 1960-1976, 1994-2007, 2041-2059, 2078-2096, 2115-2133, 2152-2170, 2189-2207, 2226-2244, 2263-2281, 2300-2318, 2337-2355, 2374-2391, 2419-2435, 2466-2482, 2560-2588, and 2604-2627; these read VKPESRRESS, HAEDSKEPSRPESKVECLKDESEVLKGSTRRESVAESDK, MKDESMSKEPSRRESVK, SAKDGADDLKELSR, SVKDEAEKSKEESRRESVA, SIKDEAEKSKEESRRESVA, SIKDEAEKSKEETRRESVA, SIKDEAEKSKEESRRESAA, SVKDEADKSKEESRRESM, SVKDDPVKSKEPSRRES, SVKDEAEKQESRRESKT, IKYDLDKPQIIKDDKSTEHSRRESLEDKS, and SDHEAAVAIEDDAKSSISPKDKSR. The stretch at 2355–2391 is repeat 20; the sequence is AEKSPLPSKEASRPASVAESVKDEADKSKEESRRESM. Tandem repeats lie at residues 2703–2726 and 2761–2787. Over residues 2764 to 2780 the composition is skewed to basic and acidic residues; the sequence is ESKDDAAQLKSSVEDLR. At S2800 the chain carries Phosphoserine; by GSK3-beta. A run of 3 repeats spans residues 2820–2846, 2864–2892, and 2907–2933. Residues 2845 to 2861 show a composition bias toward low complexity; sequence PQTSTPTSSPTVASVQP. 2 stretches are compositionally biased toward basic and acidic residues: residues 2889–2914 and 2942–2954; these read AEERPESPAESAKDAAESVEKSKDAS and GPKDDVEKSKESS. Residues 2955–2966 are compositionally biased toward polar residues; it reads RPPSVSASITGD. 28 repeat units span residues 2956–2987, 3006–3034, 3049–3075, 3089–3117, 3131–3158, 3200–3224, 3228–3256, 3265–3293, 3302–3330, 3339–3367, 3376–3404, 3413–3441, 3450–3478, 3487–3515, 3524–3552, 3561–3589, 3598–3626, 3635–3663, 3672–3700, 3709–3737, 3746–3774, 3783–3811, 3820–3848, 3867–3894, 3895–3921, 3931–3958, 3968–3995, and 4005–4032. Basic and acidic residues-rich tracts occupy residues 2980–2996, 3017–3051, 3061–3075, 3087–3116, 3156–3168, 3175–3208, and 3226–3248; these read SVKDEHDKAESRRESIA, SQKDEKSTLASKEASRRESVVESSKDDAEKSESRP, VPRESKSPLDSKDTS, EDEKSEQQSRRESVAESVKADTKKDGKSQE, PMDKADKSKEPSR, SIKHENTKDEESPLGSRRDSVAESIKSDITKGEK, and IKDEKAESRRESVAESVKPESSK. 3 positions are modified to phosphoserine: S3067, S3071, and S3075. A compositionally biased stretch (basic and acidic residues) spans 3300 to 3310; that stretch reads SRPESEAESLK. Residues 3316–3327 show a composition bias toward polar residues; that stretch reads SQETSRPESVTE. 14 stretches are compositionally biased toward basic and acidic residues: residues 3350–3363, 3373–3399, 3419–3431, 3448–3465, 3484–3502, 3521–3539, 3558–3576, 3599–3613, 3632–3650, 3669–3687, 3710–3724, 3743–3761, 3780–3798, and 3817–3835; these read NAKDSADESKEQRP, SIKDEKSPLASKDEAEKSKEESRRESV, SVKDEAEKSKEES, VKDEAEKSKEESRRESVA, SVKDEADKSKEESRRESGA, SIKDEAEKSKEESRRESVA, SVKDEAEKSKEESRRDSVA, EAEKSKEESRRESVA, SVKDEAEKSKEESSRDSVA, SVKDDAEKSKEESRRESVA, and SVKDEAEKSKEESRRESVA. Residues 3836 to 3850 show a composition bias toward low complexity; sequence EKSSLASKKASRPAS. Composition is skewed to basic and acidic residues over residues 3854–3872, 3891–3909, 3928–3946, 3965–3983, 4002–4020, 4039–4066, 4086–4095, and 4115–4141; these read SVKDEAEKSKEESRRESVA, SVKDEADKSKEESRRESGA, SVKDETEKSKEESRRESVT, SIKDEAEGTKQESRRESMPESGKAESIK, SVKDETEKPE, and AKDEKSPLHSRPESVADKSPDASKEAS. 2 stretches are compositionally biased toward polar residues: residues 4142–4152 and 4214–4223; these read RSLSVAETASS and QPDTGHTAST. Basic and acidic residues-rich tracts occupy residues 4362–4379, 4386–4410, and 4419–4432; these read IIPDFDERQLEEKLKSTA, DKSTRDEKSLEISVKVEIESEKSSP, and IEEKDKIEQSEKAQ. Over residues 4443 to 4461 the composition is skewed to low complexity; sequence PESVASQPESVPSPSQSAA. The span at 4462 to 4481 shows a compositional bias: basic and acidic residues; sequence SHEHKEVELSESHKAEKSSR. Residues 4498–4508 are compositionally biased toward polar residues; it reads RPASSTSQFST. Over residues 4517–4528 the composition is skewed to low complexity; sequence ESLLHSLTTTET. Positions 4529 to 4539 are enriched in basic and acidic residues; that stretch reads VETKQMEEKSS. Over residues 4540-4560 the composition is skewed to low complexity; sequence FESVSTSVTKSTVLSSQSTVQ. Basic and acidic residues-rich tracts occupy residues 4575 to 4584 and 4639 to 4650; these read KVEDSSRRES and SNKEIKDARETK. 2 stretches are compositionally biased toward low complexity: residues 4651 to 4662 and 4703 to 4714; these read VTSQFTTTTSSA and TTASAVSSTSAS. The segment covering 4744-4754 has biased composition (acidic residues); it reads PEDEEPADDVD. 2 stretches are compositionally biased toward basic and acidic residues: residues 4755 to 4764 and 4788 to 4798; these read ERSSVKESRS and LVEEEHEHVEE. Low complexity predominate over residues 4804–4829; sequence TSTSKTTTLLQSSEQSSTTTSSTSKT. Residues 4835-4851 show a composition bias toward polar residues; sequence ESITLTQMDQQTSQSQG. Residues 4875–4905 are compositionally biased toward low complexity; the sequence is GSAGSVIGAGAGAVAAGGKCESSAASIVSSS. A compositionally biased stretch (polar residues) spans 4915–4930; that stretch reads GKSSPGALTSESQSIP. Position 4950 is a phosphoserine; by GSK3-beta (S4950). A compositionally biased stretch (basic and acidic residues) spans 4955 to 4970; it reads VSKDELKSLEMQHHSQ. The span at 5101-5112 shows a compositional bias: polar residues; it reads SYELQHSSSGVS. A compositionally biased stretch (low complexity) spans 5185–5196; the sequence is SQSSESVESSSQ.

As to quaternary structure, heterodimer of a heavy and a light chain. Interacts with Fmr1. Found in a complex with tubulin and Futsch. In terms of processing, several minor light chains can be created with markedly different pIs. Phosphorylated by SGG/GSK3. Phosphorylated by LRRK2 at the presynapse of neuromuscular junctions, which negatively regulates the activity controlling synaptic differentiation. Neuronal cells within the PNS and CNS.

It localises to the cytoplasm. It is found in the cytoskeleton. Its function is as follows. During embryogenesis, necessary for dendritic and axonal organization and growth at the neuromuscular junction through the regulation of the synaptic microtubule cytoskeleton. Microtubule hairpin loops are found within a small subset of synaptic boutons at the neuromuscular synapse, these loops are stabilized by futsch. Loop morphology and dynamics suggest that rearrangement of these microtubule-based loops is a critical component of the process of bouton division and for subsequent nerve-terminal growth and branching. Translation is repressed by Fmr1. Together with ringer, required for neuromuscular junction (NMJ) bouton growth by regulating synaptic microtubules. Function with ringer in maintaining microtubule stability and dynamics, is essential for promoting axon regeneration in response to peripheral (PNS) and central nervous system (CNS) injury. In response to axotomy, acts downstream of a stress response cascade involving Xbp1 splicing, to control axon regeneration. This Drosophila melanogaster (Fruit fly) protein is Microtubule-associated protein futsch (futsch).